The primary structure comprises 340 residues: Phosphoribosylformylglycinamidine cyclo-ligase (340 aa).

Belongs to the AIR synthase family.

It localises to the cytoplasm. The enzyme catalyses 2-formamido-N(1)-(5-O-phospho-beta-D-ribosyl)acetamidine + ATP = 5-amino-1-(5-phospho-beta-D-ribosyl)imidazole + ADP + phosphate + H(+). It functions in the pathway purine metabolism; IMP biosynthesis via de novo pathway; 5-amino-1-(5-phospho-D-ribosyl)imidazole from N(2)-formyl-N(1)-(5-phospho-D-ribosyl)glycinamide: step 2/2. The protein is Phosphoribosylformylglycinamidine cyclo-ligase of Streptococcus agalactiae serotype Ia (strain ATCC 27591 / A909 / CDC SS700).